We begin with the raw amino-acid sequence, 90 residues long: RNA-binding protein Hfq (90 aa).

A Sm domain is found at 9 to 69; sequence DRFLNHLRVN…ISTIIPSSYV (61 aa).

The protein belongs to the Hfq family. As to quaternary structure, homohexamer.

Functionally, RNA chaperone that binds small regulatory RNA (sRNAs) and mRNAs to facilitate mRNA translational regulation in response to envelope stress, environmental stress and changes in metabolite concentrations. Also binds with high specificity to tRNAs. The polypeptide is RNA-binding protein Hfq (Thermotoga sp. (strain RQ2)).